A 412-amino-acid polypeptide reads, in one-letter code: MIARCKGCSDLLPEDMLRFRYIESIFHDSCITWGYEEVRTPMLEYLSLFTSSGTLTPQMLKRVYSFLDWDGWSGERVVLRPDGTIPAARLYIDSLQEMDVARLCYTSNIFRFDETGKKSRENWQLGAELIGVTSPEANAELITLALETLARLGFEDVELRLSHAQLIKAVLAQLEPNADEQHKIFDQLLDGDIALMSRLETEKPELFRTLKLLMENKGTSASFLKNVMAMAGTAGGELEEPLNDFIAGVDVLDKLGVSYQIDLASGKGFEYYTGVIFHLFVNGEHVGGGGRYDKLIPLLGGPDKPAAGFALYLNRLIPMIDAEDMYDMVEEKILIKYQGDNLKTAYEIANLIRECGISAELFYPGVDTAAYGWAVTVKAEDCYEVTDLIEDKTLELKEQSEVIYLLNGEEDA.

Belongs to the class-II aminoacyl-tRNA synthetase family. HisZ subfamily. Heteromultimer composed of HisG and HisZ subunits.

The protein localises to the cytoplasm. Its pathway is amino-acid biosynthesis; L-histidine biosynthesis; L-histidine from 5-phospho-alpha-D-ribose 1-diphosphate: step 1/9. Its function is as follows. Required for the first step of histidine biosynthesis. May allow the feedback regulation of ATP phosphoribosyltransferase activity by histidine. The protein is ATP phosphoribosyltransferase regulatory subunit of Dehalococcoides mccartyi (strain ATCC BAA-2100 / JCM 16839 / KCTC 5957 / BAV1).